Here is a 93-residue protein sequence, read N- to C-terminus: Small integral membrane protein 41 (93 aa).

A helical membrane pass occupies residues 38–58 (VVLGVLSLLVLCGVLFLGGGL). A compositionally biased stretch (basic and acidic residues) spans 71–80 (REQRASREPE). The tract at residues 71-93 (REQRASREPEPGSASGEDGDDDS) is disordered.

Its subcellular location is the membrane. This is Small integral membrane protein 41 from Homo sapiens (Human).